Consider the following 359-residue polypeptide: 3-isopropylmalate dehydrogenase (359 aa).

77–88 (GPKWGTGDVRPE) provides a ligand contact to NAD(+). Residues arginine 95, arginine 105, arginine 134, and aspartate 223 each contribute to the substrate site. Mg(2+) is bound by residues aspartate 223, aspartate 248, and aspartate 252. 287–298 (GSAPDLPAGKVN) serves as a coordination point for NAD(+).

Belongs to the isocitrate and isopropylmalate dehydrogenases family. Homodimer. It depends on Mg(2+) as a cofactor. The cofactor is Mn(2+).

The protein resides in the cytoplasm. It catalyses the reaction (2R,3S)-3-isopropylmalate + NAD(+) = 4-methyl-2-oxopentanoate + CO2 + NADH. Its pathway is amino-acid biosynthesis; L-leucine biosynthesis; L-leucine from 3-methyl-2-oxobutanoate: step 3/4. Functionally, catalyzes the oxidation of 3-carboxy-2-hydroxy-4-methylpentanoate (3-isopropylmalate) to 3-carboxy-4-methyl-2-oxopentanoate. The product decarboxylates to 4-methyl-2 oxopentanoate. This chain is 3-isopropylmalate dehydrogenase (LEU2), found in Diutina rugosa (Yeast).